Consider the following 342-residue polypeptide: MDSRGFLSLRCLLVLALASKLSCGTGESLMNCPEVPGKLGSSLQLSLASEGISKRMNKSIHILVTRAESPGNSIKKKIVSLDLPEGGSPRYLENGYKFHLENLTLRILESRRENEGWYFMTLEENFSVQHFCLQLKLYEQVSTPEIKVLNWTQENGNCSMMLACEVEKGDNVVYSWSEKLGIDPLIPANSSHLLHLSLGPQHVNNVYVCTVSNPVSNRSWSFNPWSKCRPESSVPRQWRLYAGLFLGGIVGVILIFEVVLLLLRRRGKTNHYKPTKEEKSLTIYAQVQKSGSTQKKPDPLPAEDPCTTIYVAATEPVPEPAPEPVQEPHSITVYASVTFPES.

The signal sequence occupies residues 1 to 26 (MDSRGFLSLRCLLVLALASKLSCGTG). At 27-237 (ESLMNCPEVP…CRPESSVPRQ (211 aa)) the chain is on the extracellular side. The region spanning 29 to 138 (LMNCPEVPGK…QHFCLQLKLY (110 aa)) is the Ig-like V-type domain. 7 N-linked (GlcNAc...) asparagine glycosylation sites follow: asparagine 57, asparagine 102, asparagine 125, asparagine 150, asparagine 157, asparagine 189, and asparagine 217. The Ig-like C2-type domain occupies 144 to 223 (PEIKVLNWTQ…PVSNRSWSFN (80 aa)). 2 cysteine pairs are disulfide-bonded: cysteine 158–cysteine 228 and cysteine 164–cysteine 209. A helical membrane pass occupies residues 238–261 (WRLYAGLFLGGIVGVILIFEVVLL). At 262-342 (LLRRRGKTNH…VYASVTFPES (81 aa)) the chain is on the cytoplasmic side. The ITSM 1 signature appears at 282–287 (TIYAQV). Phosphotyrosine; by FYN occurs at positions 284, 310, and 334. The SH2-binding signature appears at 310–315 (YVAATE). The ITSM 2 signature appears at 332-337 (TVYASV).

As to quaternary structure, interacts (via cytoplasmic domain) with SH2D1A and SH2D1B; SH2D1A mediates association with FYN. Interacts (via cytoplasmic domain phosphorylated on tyrosine residues) with INPP5D and PTPN11; presence of SH2D1A facilitates binding to INPP5D. Interacts with MAP4K1. Interacts with PIK3C3, BECN1 and UVRAG; indicative for an association with PI3K complex II (PI3KC3-C2). Interacts with canine distemper virus HN protein; suggesting that it may serve as a receptor. In terms of processing, phosphorylated on tyrosine residues by FYN.

The protein localises to the cell membrane. Functionally, self-ligand receptor of the signaling lymphocytic activation molecule (SLAM) family. SLAM receptors triggered by homo- or heterotypic cell-cell interactions are modulating the activation and differentiation of a wide variety of immune cells and thus are involved in the regulation and interconnection of both innate and adaptive immune response. Activities are controlled by presence or absence of small cytoplasmic adapter proteins, SH2D1A/SAP and/or SH2D1B/EAT-2. SLAMF1-induced signal-transduction events in T-lymphocytes are different from those in B-cells. Two modes of SLAMF1 signaling seem to exist: one depending on SH2D1A (and perhaps SH2D1B) and another in which protein-tyrosine phosphatase 2C (PTPN11)-dependent signal transduction operates. Initially it has been proposed that association with SH2D1A prevents binding to inhibitory effectors including INPP5D/SHIP1 and PTPN11/SHP-2. However, signaling is also regulated by SH2D1A which can simultaneously interact with and recruit FYN which subsequently phosphorylates and activates SLAMF1. Mediates IL-2-independent proliferation of activated T cells during immune responses and induces IFN-gamma production. Downstreaming signaling involves INPP5D/SHIP1, DOK1 and DOK2 leading to inhibited IFN-gamma production in T-cells, and PRKCQ, BCL10 and NFKB1 leading to increased T-cell activation and Th2 cytokine production. Promotes T-cell receptor-induced IL-4 secretion by CD4(+) cells. Inhibits antigen receptor-mediated production of IFN-gamma, but not IL-2, in CD4(-)/CD8(-) T-cells. Required for IL-4 production by germinal centers T follicular helper (T(Fh))cells. May inhibit CD40-induced signal transduction in monocyte-derived dendritic cells. May play a role in allergic responses and may regulate allergen-induced Th2 cytokine and Th1 cytokine secretion. In conjunction with SLAMF6 controls the transition between positive selection and the subsequent expansion and differentiation of the thymocytic natural killer T (NKT) cell lineage. Involved in the peripheral differentiation of indifferent natural killer T (iNKT) cells toward a regulatory NKT2 type. In macrophages involved in down-regulation of IL-12, TNF-alpha and nitric oxide in response to lipopolysaccharide (LPS). In B-cells activates the ERK signaling pathway independently of SH2D1A but implicating both, SYK and INPP5D, and activates Akt signaling dependent on SYK and SH2D1A. In conjunction with SLAMF5 and SLAMF6 may be a negative regulator of the humoral immune response. The chain is Signaling lymphocytic activation molecule (SLAMF1) from Canis lupus familiaris (Dog).